The following is a 487-amino-acid chain: Protein FAM221B (487 aa).

2 stretches are compositionally biased toward polar residues: residues 1 to 13 (MEAN…PQDT) and 36 to 48 (HETP…SQKH). 2 disordered regions span residues 1-103 (MEAN…QSVT) and 132-289 (QLSP…VTSR). Positions 81-103 (PPVKSSSSGLLSLPPQLSPQSVT) are enriched in low complexity. Composition is skewed to basic and acidic residues over residues 227 to 236 (ESEHFPKHSF) and 243 to 253 (AKEDESTKEGE). Residue Ser-248 is modified to Phosphoserine.

This sequence belongs to the FAM221 family.

This is Protein FAM221B (Fam221b) from Mus musculus (Mouse).